Reading from the N-terminus, the 183-residue chain is Peptide deformylase (183 aa).

Cysteine 110 and histidine 153 together coordinate Fe cation. Glutamate 154 is an active-site residue. Histidine 157 contributes to the Fe cation binding site.

This sequence belongs to the polypeptide deformylase family. Requires Fe(2+) as cofactor.

The enzyme catalyses N-terminal N-formyl-L-methionyl-[peptide] + H2O = N-terminal L-methionyl-[peptide] + formate. Its function is as follows. Removes the formyl group from the N-terminal Met of newly synthesized proteins. Requires at least a dipeptide for an efficient rate of reaction. N-terminal L-methionine is a prerequisite for activity but the enzyme has broad specificity at other positions. The sequence is that of Peptide deformylase from Listeria monocytogenes serotype 4b (strain CLIP80459).